A 345-amino-acid polypeptide reads, in one-letter code: MKALVKAKREEGIWMQHDVPVPEVGVHDVMIRVTKSAICGTDVHIYNWDEWSQKTVPVPMVVGHEYVGRVEKVGAEVEAFRPGERVSGEGHVTCGFCRNCRAGRRHLCRHTVGVGVNRPGSFAEYVVIPADNVYRIPDDIPDDIAAIFDPFGNATHTALSFDLVGEDVLVTGAGPIGVMAAAIARHVGARHVVVTDVNDYRLDLARRMGASRAVNVAKEDLRAVMSELGMREGFDVGLEMSGNGRAFRQLLEVMNHGGKVALLGIMAGPEPIDWSQVVFKGLQLKGVYGREMYETWYKMVAMLQSGLDLTAVVTHRFSIDDFQQGFDVMRSGRSGKVVLDWGAAR.

Residue C39 participates in Zn(2+) binding. Active-site charge relay system residues include T41 and H44. Zn(2+)-binding residues include H64, E65, C94, C97, C100, and C108. NAD(+)-binding positions include I176, D196, R201, 263-265 (LGI), and 287-288 (VY).

This sequence belongs to the zinc-containing alcohol dehydrogenase family. Homotetramer. The cofactor is Zn(2+).

The protein localises to the cytoplasm. It catalyses the reaction L-threonine + NAD(+) = (2S)-2-amino-3-oxobutanoate + NADH + H(+). Its pathway is amino-acid degradation; L-threonine degradation via oxydo-reductase pathway; glycine from L-threonine: step 1/2. Catalyzes the NAD(+)-dependent oxidation of L-threonine to 2-amino-3-ketobutyrate. This chain is L-threonine 3-dehydrogenase, found in Anaeromyxobacter dehalogenans (strain 2CP-1 / ATCC BAA-258).